The sequence spans 360 residues: Membrane-bound lytic murein transglycosylase C (360 aa).

Positions 1-16 (MKKFFALALVAPLLIS) are cleaved as a signal peptide. Residue C17 is the site of N-palmitoyl cysteine attachment. A lipid anchor (S-diacylglycerol cysteine) is attached at C17.

This sequence belongs to the transglycosylase Slt family.

It is found in the cell outer membrane. The catalysed reaction is Exolytic cleavage of the (1-&gt;4)-beta-glycosidic linkage between N-acetylmuramic acid (MurNAc) and N-acetylglucosamine (GlcNAc) residues in peptidoglycan, from either the reducing or the non-reducing ends of the peptidoglycan chains, with concomitant formation of a 1,6-anhydrobond in the MurNAc residue.. Its function is as follows. Murein-degrading enzyme. May play a role in recycling of muropeptides during cell elongation and/or cell division. This chain is Membrane-bound lytic murein transglycosylase C, found in Citrobacter koseri (strain ATCC BAA-895 / CDC 4225-83 / SGSC4696).